The following is a 395-amino-acid chain: [LysW]-aminoadipate semialdehyde transaminase (395 aa).

Pyridoxal 5'-phosphate is bound by residues Gly113–Thr114 and Phe140. Substrate is bound at residue Arg143. Asp225–Gln228 is a pyridoxal 5'-phosphate binding site. Lys254 is modified (N6-(pyridoxal phosphate)lysine). Thr282 provides a ligand contact to substrate. Residue Thr283 coordinates pyridoxal 5'-phosphate.

It belongs to the class-III pyridoxal-phosphate-dependent aminotransferase family. LysJ subfamily. As to quaternary structure, homodimer. It depends on pyridoxal 5'-phosphate as a cofactor.

It is found in the cytoplasm. It carries out the reaction [amino-group carrier protein]-C-terminal-gamma-(L-lysyl)-L-glutamate + 2-oxoglutarate = [amino-group carrier protein]-C-terminal-N-(1-carboxy-5-oxopentan-1-yl)-L-glutamine + L-glutamate. The protein operates within amino-acid biosynthesis; L-lysine biosynthesis via AAA pathway; L-lysine from L-alpha-aminoadipate (Thermus route): step 4/5. In terms of biological role, catalyzes the transfer of the amino group of L-glutamate to [LysW]-aminoadipate 6-semialdehyde, generating [LysW]-gamma-L-lysine. The chain is [LysW]-aminoadipate semialdehyde transaminase from Thermus thermophilus (strain ATCC 27634 / DSM 579 / HB8).